Reading from the N-terminus, the 367-residue chain is 2'-5'-oligoadenylate synthase 1A (367 aa).

The segment at 14–61 (DKFIEDYLLPDTTFGADVKSAVNVVCDFLKERCFQGAAHPVRVSKVVK) is interaction with dsRNA. An ATP-binding site is contributed by Ser-64. Asp-76, Asp-78, and Asp-149 together coordinate Mg(2+). The interaction with dsRNA stretch occupies residues 201-211 (QRPTKLKSLIR). Arg-211, Lys-214, and Gln-231 together coordinate ATP. The S-geranylgeranyl cysteine moiety is linked to residue Cys-364.

This sequence belongs to the 2-5A synthase family. In terms of assembly, monomer. Homotetramer. Interacts with OAS1D; the interaction inhibits OAS1A catalytic activity. Mg(2+) serves as cofactor. In terms of processing, C-terminal prenylated. As to expression, expressed in oocytes and granulosa cells of ovary, in intestine, stomach, spleen and uterus (at protein level). Expressed at high levels in the digestive tract and lymphoid organs. Expressed in ovary and spleen.

The protein localises to the cytoplasm. It localises to the mitochondrion. The protein resides in the nucleus. Its subcellular location is the microsome. It is found in the endoplasmic reticulum. It carries out the reaction 3 ATP = 5'-triphosphoadenylyl-(2'-&gt;5')-adenylyl-(2'-&gt;5')-adenosine + 2 diphosphate. Its activity is regulated as follows. Produced as a latent enzyme which is activated by dsRNA generated during the course of viral infection. The dsRNA activator must be at least 15 nucleotides long, and no modification of the 2'-hydroxyl group is tolerated. ssRNA or dsDNA do not act as activators. Functionally, interferon-induced, dsRNA-activated antiviral enzyme which plays a critical role in cellular innate antiviral response. In addition, it may also play a role in other cellular processes such as apoptosis, cell growth, differentiation and gene regulation. Synthesizes higher oligomers of 2'-5'-oligoadenylates (2-5A) from ATP which then bind to the inactive monomeric form of ribonuclease L (RNase L) leading to its dimerization and subsequent activation. Activation of RNase L leads to degradation of cellular as well as viral RNA, resulting in the inhibition of protein synthesis, thus terminating viral replication. Can mediate the antiviral effect via the classical RNase L-dependent pathway or an alternative antiviral pathway independent of RNase L. This Mus musculus (Mouse) protein is 2'-5'-oligoadenylate synthase 1A (Oas1a).